Reading from the N-terminus, the 479-residue chain is Neuronal acetylcholine receptor subunit alpha-9 (479 aa).

The N-terminal stretch at 1–22 (MNWSHSCISFCWIYFAASRLRA) is a signal peptide. Over 23–238 (AETADGKYAQ…FTLLLKRRSS (216 aa)) the chain is Extracellular. N-linked (GlcNAc...) asparagine glycosylation occurs at asparagine 57. A disulfide bridge links cysteine 155 with cysteine 169. N-linked (GlcNAc...) asparagine glycosylation is present at asparagine 170. Positions 191 and 193 each coordinate Na(+). An intrachain disulfide couples cysteine 219 to cysteine 220. 3 helical membrane-spanning segments follow: residues 239–259 (FYIV…PLSF), 269–289 (VSLG…VAEI), and 303–323 (YIAT…VMNI). At 324-457 (HFCGAEARPV…WKKVAKVIDR (134 aa)) the chain is on the cytoplasmic side. Residues 458–478 (FFMWIFFIMVFVMTILIIARA) form a helical membrane-spanning segment.

This sequence belongs to the ligand-gated ion channel (TC 1.A.9) family. Acetylcholine receptor (TC 1.A.9.1) subfamily. Alpha-9/CHRNA9 sub-subfamily. Forms homo- or heteropentameric channels in conjunction with CHRNA10. The native outer hair cell receptor is composed of CHRNA9:CHRNA10 heterooligomers. Found in the stoichiometric form (CHRNA9)2:(CHRNA10)3. Post-translationally, N-glycosylated. As to expression, expressed in cochlea, keratinocytes, pituitary gland, B-cells and T-cells.

Its subcellular location is the synaptic cell membrane. The protein resides in the cell membrane. It catalyses the reaction Ca(2+)(in) = Ca(2+)(out). The enzyme catalyses K(+)(in) = K(+)(out). The catalysed reaction is Na(+)(in) = Na(+)(out). It carries out the reaction Mg(2+)(in) = Mg(2+)(out). With respect to regulation, activated by a myriad of ligands such as acetylcholine. AChR activity is inhibited by the antagonist alpha-conotoxins RgIA and GeXXA, small disulfide-constrained peptides from cone snails. Functionally, component of neuronal acetylcholine receptors (nAChRs) that function as pentameric, ligand-gated cation channels with high calcium permeability among other activities. nAChRs are excitatory neurotrasnmitter receptors formed by a collection of nAChR subunits known to mediate synaptic transmission in the nervous system and the neuromuscular junction. Each nAchR subunit confers differential attributes to channel properties, including activation, deactivation and desensitization kinetics, pH sensitivity, cation permeability, and binding to allosteric modulators. Forms either homopentamers or heteropentamers with CHRNA10. Expressed in the inner ear, in sympathetic neurons and in other non-neuronal cells, such as skin keratinocytes and lymphocytes. nAChR formed by CHRNA9:CHRNA10 mediate central nervous system control of auditory and vestibular sensory processing. The channel is permeable to a range of divalent cations including calcium, the influx of which may activate a potassium current which hyperpolarizes the cell membrane. In the ear, mediates synaptic transmission between efferent olivocochlear fibers and hair cells of the cochlea, this may lead to a reduction in basilar membrane motion, altering the activity of auditory nerve fibers and reducing the range of dynamic hearing. This may protect against acoustic trauma. May also regulate keratinocyte adhesion. The polypeptide is Neuronal acetylcholine receptor subunit alpha-9 (Homo sapiens (Human)).